A 264-amino-acid polypeptide reads, in one-letter code: Nuclear egress protein 1 (264 aa).

Basic residues predominate over residues 1–12 (MTVHKSRIRRSR). Residues 1-22 (MTVHKSRIRRSRSLSVTHRIQK) form a disordered region. Residues 83–187 (CLEFSPYANE…HIVFQSRTLH (105 aa)) form a CCCH-type zinc finger.

It belongs to the herpesviridae NEC1 protein family. Forms a heterohexameric complex with NEC2. Interacts with capsid vertex specific component 2/CVC2; this interaction directs the capsid to the host inner nuclear membrane to initiate budding. Phosphorylated at serine residues in the N-terminus. This phosphorylation regulates the localization within the inner nuclear membrane.

It localises to the host nucleus inner membrane. Plays an essential role in virion nuclear egress, the first step of virion release from infected cell. Within the host nucleus, NEC1 interacts with the newly formed capsid through the vertexes and directs it to the inner nuclear membrane by associating with NEC2. Induces the budding of the capsid at the inner nuclear membrane as well as its envelopment into the perinuclear space. There, the NEC1/NEC2 complex promotes the fusion of the enveloped capsid with the outer nuclear membrane and the subsequent release of the viral capsid into the cytoplasm where it will reach the secondary budding sites in the host Golgi or trans-Golgi network. This Human herpesvirus 6A (strain Uganda-1102) (HHV-6 variant A) protein is Nuclear egress protein 1.